A 241-amino-acid chain; its full sequence is Linker for activation of T-cells family member 1 (241 aa).

Residues 1 to 4 are Extracellular-facing; sequence MEAD. Residues 5 to 28 traverse the membrane as a helical; Signal-anchor for type III membrane protein segment; it reads ALSPVELGLLLLPFVVMLLAALCV. S-palmitoyl cysteine attachment occurs at residues Cys-27 and Cys-30. Residues 29-241 lie on the Cytoplasmic side of the membrane; it reads RCRELPASYD…PDYENLQELN (213 aa). Residues Ser-41, Ser-44, Ser-87, Ser-104, Ser-109, and Ser-112 each carry the phosphoserine modification. Residues 78 to 139 form a disordered region; sequence QPDLLPIPRS…DDYPEGYLVV (62 aa). A compositionally biased stretch (polar residues) spans 97–115; sequence MPSSRQNSDDANSVASYEN. A compositionally biased stretch (acidic residues) spans 124–133; that stretch reads DEDEDEDDYP. The segment at 136–139 is interaction with PLCG1; sequence YLVV. Position 175 is a phosphotyrosine (Tyr-175). Interaction with GRB2, GRAP2 and PIK3R1 stretches follow at residues 175–178 and 195–198; these read YVNV. Ser-199, Ser-212, and Ser-215 each carry phosphoserine. The disordered stretch occupies residues 209-241; that stretch reads ELASVTSQEVEDEEEEDVDGEEAPDYENLQELN. The span at 217 to 233 shows a compositional bias: acidic residues; the sequence is EVEDEEEEDVDGEEAPD. Tyr-234 carries the phosphotyrosine modification.

As to quaternary structure, when phosphorylated, interacts directly with the PIK3R1 subunit of phosphoinositide 3-kinase and the SH2 domains of GRB2, GRAP, GRAP2, PLCG1 and PLCG2. Interacts indirectly with CBL, SOS, VAV, and LCP2. Interacts with SHB, SKAP2 and CLNK. Interacts with FCGR1A. Interacts with GRB2, PLCG1 and THEMIS upon TCR activation in thymocytes. Interacts with THEMIS2. Phosphorylated on tyrosines by ZAP70 upon TCR activation, or by SYK upon other immunoreceptor activation; which leads to the recruitment of multiple signaling molecules. Is one of the most prominently tyrosine-phosphorylated proteins detected following TCR engagement. May be dephosphorylated by PTPRJ. In terms of processing, palmitoylation of Cys-27 and Cys-30 is required for raft targeting and efficient phosphorylation. Post-translationally, phosphorylated on tyrosines by ZAP70 upon TCR activation, or by SYK upon other immunoreceptor activation; which leads to the recruitment of multiple signaling molecules. Is one of the most prominently tyrosine-phosphorylated proteins detected following TCR engagement. May be dephosphorylated by PTPRJ. Phosphorylated by ITK leading to the recruitment of VAV1 to LAT-containing complexes. 'Lys-63'-linked ubiquitinated by TRAF6. As to expression, expressed in NK cells. Present in lymph node, spleen and thymus (at protein level).

It is found in the cell membrane. Its function is as follows. Required for TCR (T-cell antigen receptor)- and pre-TCR-mediated signaling, both in mature T-cells and during their development. Involved in FCGR3 (low affinity immunoglobulin gamma Fc region receptor III)-mediated signaling in natural killer cells and FCER1 (high affinity immunoglobulin epsilon receptor)-mediated signaling in mast cells. Couples activation of these receptors and their associated kinases with distal intracellular events such as mobilization of intracellular calcium stores, PKC activation, MAPK activation or cytoskeletal reorganization through the recruitment of PLCG1, GRB2, GRAP2, and other signaling molecules. This is Linker for activation of T-cells family member 1 (Lat) from Rattus norvegicus (Rat).